The following is a 441-amino-acid chain: MKPLIAIVGRPNVGKSTLFNRLVGRRKAMVDDMPGVTRDRNYADVNRFDVPFILIDTGGFEPETSDRLLQQMREQSQLAMDEADLILFVMDGRDGLTPADVEVVEMLRRVNKPVFYVVNKIDGDRQENAAGDFYSLGIEQIFTISAEHNRGVNDLMEEVIAALPNKTAPAVDEEVTRIAVIGRPNVGKSTLVNRLLGVERVVANPTPGTTRDSIDTYFNCNKKRYLLIDTAGIRRKGKTTEKIEKYSVVDSLRSIERADVVLIVIDAEEGVTEQDTKIAGYAFEAGRGCIFVVNKWDAISKDNASMGIFVEKIRMEFKYLPFAPIVFVSAKTGQRLGKIMTEVDSVMEQFAKRISTSDLNRVFSKAVEEHHAPLYQGRRVKFYFATQVGTKPPSIVIFTNRPDGVHFSYERYIINRFRDAFGFTGTPMRLLFKGREGRKRG.

EngA-type G domains are found at residues 3–167 (PLIA…PNKT) and 176–351 (TRIA…EQFA). GTP is bound by residues 9 to 16 (GRPNVGKS), 56 to 60 (DTGGF), 119 to 122 (NKID), 182 to 189 (GRPNVGKS), 229 to 233 (DTAGI), and 294 to 297 (NKWD). One can recognise a KH-like domain in the interval 352 to 436 (KRISTSDLNR…PMRLLFKGRE (85 aa)).

The protein belongs to the TRAFAC class TrmE-Era-EngA-EngB-Septin-like GTPase superfamily. EngA (Der) GTPase family. In terms of assembly, associates with the 50S ribosomal subunit.

In terms of biological role, GTPase that plays an essential role in the late steps of ribosome biogenesis. The polypeptide is GTPase Der (Geotalea daltonii (strain DSM 22248 / JCM 15807 / FRC-32) (Geobacter daltonii)).